A 134-amino-acid polypeptide reads, in one-letter code: Large ribosomal subunit protein eL14 (134 aa).

It belongs to the eukaryotic ribosomal protein eL14 family. In terms of assembly, component of the large ribosomal subunit (LSU). Mature yeast ribosomes consist of a small (40S) and a large (60S) subunit. The 40S small subunit contains 1 molecule of ribosomal RNA (18S rRNA) and at least 33 different proteins. The large 60S subunit contains 3 rRNA molecules (25S, 5.8S and 5S rRNA) and at least 46 different proteins.

The protein localises to the cytoplasm. Its subcellular location is the nucleus. Component of the ribosome, a large ribonucleoprotein complex responsible for the synthesis of proteins in the cell. The small ribosomal subunit (SSU) binds messenger RNAs (mRNAs) and translates the encoded message by selecting cognate aminoacyl-transfer RNA (tRNA) molecules. The large subunit (LSU) contains the ribosomal catalytic site termed the peptidyl transferase center (PTC), which catalyzes the formation of peptide bonds, thereby polymerizing the amino acids delivered by tRNAs into a polypeptide chain. The nascent polypeptides leave the ribosome through a tunnel in the LSU and interact with protein factors that function in enzymatic processing, targeting, and the membrane insertion of nascent chains at the exit of the ribosomal tunnel. The polypeptide is Large ribosomal subunit protein eL14 (rpl14) (Schizosaccharomyces pombe (strain 972 / ATCC 24843) (Fission yeast)).